The chain runs to 317 residues: Acetyl-coenzyme A carboxylase carboxyl transferase subunit alpha (317 aa).

One can recognise a CoA carboxyltransferase C-terminal domain in the interval arginine 40–glutamate 294.

Belongs to the AccA family. In terms of assembly, acetyl-CoA carboxylase is a heterohexamer composed of biotin carboxyl carrier protein (AccB), biotin carboxylase (AccC) and two subunits each of ACCase subunit alpha (AccA) and ACCase subunit beta (AccD).

The protein resides in the cytoplasm. It catalyses the reaction N(6)-carboxybiotinyl-L-lysyl-[protein] + acetyl-CoA = N(6)-biotinyl-L-lysyl-[protein] + malonyl-CoA. Its pathway is lipid metabolism; malonyl-CoA biosynthesis; malonyl-CoA from acetyl-CoA: step 1/1. Its function is as follows. Component of the acetyl coenzyme A carboxylase (ACC) complex. First, biotin carboxylase catalyzes the carboxylation of biotin on its carrier protein (BCCP) and then the CO(2) group is transferred by the carboxyltransferase to acetyl-CoA to form malonyl-CoA. The protein is Acetyl-coenzyme A carboxylase carboxyl transferase subunit alpha of Haemophilus ducreyi (strain 35000HP / ATCC 700724).